The chain runs to 528 residues: U6 snRNA (guanine-N(2))-methyltransferase THUMPD2 (528 aa).

Residues 154–168 (QEVAKDHGESQEDKL) are compositionally biased toward basic and acidic residues. Disordered stretches follow at residues 154-200 (QEVA…ADAQ) and 437-460 (MKTL…RASS). The THUMP domain occupies 162-266 (ESQEDKLLQG…DAYSVVGIPL (105 aa)).

It belongs to the methyltransferase superfamily. In terms of assembly, part of the heterodimeric THUMPD2-TRM112 methyltransferase complex; this complex forms an active tRNA methyltransferase, where TRMT112 acts as an activator of the catalytic subunit THUMPD2.

The protein localises to the nucleus. The enzyme catalyses guanosine in U6 snRNA + S-adenosyl-L-methionine = N(2)-methylguanosine in U6 snRNA + S-adenosyl-L-homocysteine + H(+). In terms of biological role, catalytic subunit of the THUMPD2-TRM112 methyltransferase complex, that specifically mediates the S-adenosyl-L-methionine-dependent N(2)-methylation of guanosine nucleotides, most probably at position 72 (m2G72), in the U6snRNA of the major spliceosome. This modification in the U6 snRNA affects the constitutive splicing efficiency of introns that have suboptimal splice sites and can impact final mRNA levels. This is U6 snRNA (guanine-N(2))-methyltransferase THUMPD2 from Mus musculus (Mouse).